Consider the following 229-residue polypeptide: MKQLVLIRHGESAWNLENRFTGWADVDLTPKGAEQALAAGENLKKAGYEFDVAYTSVLRRAIRTLWNVQDTMDLMWLPVVHSWRLNERHYGALTGLNKAETAEKYGDEQVHIWRRSYDVRPPLLEHEDERHPKNDPRYSKLNSSDIPLGECLKDNVERVLPLWNESIAPALKAGKRVLLVAHGNSIRSLIKYLDQVSNEDIMEVNVPNGIPLVYELDDDLKPIQHFYLD.

Substrate-binding positions include 8 to 15, 21 to 22, R60, 87 to 90, K98, 114 to 115, and 183 to 184; these read RHGESAWN, TG, ERHY, RR, and GN. Catalysis depends on H9, which acts as the Tele-phosphohistidine intermediate. E87 (proton donor/acceptor) is an active-site residue.

It belongs to the phosphoglycerate mutase family. BPG-dependent PGAM subfamily. Homodimer.

It catalyses the reaction (2R)-2-phosphoglycerate = (2R)-3-phosphoglycerate. Its pathway is carbohydrate degradation; glycolysis; pyruvate from D-glyceraldehyde 3-phosphate: step 3/5. Functionally, catalyzes the interconversion of 2-phosphoglycerate and 3-phosphoglycerate. In Polynucleobacter necessarius subsp. necessarius (strain STIR1), this protein is 2,3-bisphosphoglycerate-dependent phosphoglycerate mutase.